Consider the following 495-residue polypeptide: Myocyte-specific enhancer factor 2A (495 aa).

Residues 3–57 form the MADS-box domain; the sequence is RKKIQITRIMDERNRQVTFTKRKFGLMKKAYELSVLCDCEIALIIFNSSNKLFQY. The segment at residues 58 to 86 is a DNA-binding region (mef2-type); sequence ASTDMDKVLLKYTEYNEPHESRTNSDIVE. The residue at position 59 (Ser59) is a Phosphoserine; by CK2. At Ser98 the chain carries Phosphoserine. A disordered region spans residues 175–225; it reads AESSMLSPPPATLHRNVSPGAPQRPPSTGSAGGMLSTTDLTVPNGAGNGPV. Phosphoserine is present on Ser235. Residues 242-271 form a disordered region; sequence TGANSVGKVMPTKSPPPPGGGSVGMNSRKP. An N6-acetyllysine modification is found at Lys249. Ser255 is modified (phosphoserine). Residues 266-283 form a required for interaction with MAPKs region; the sequence is MNSRKPDLRVVIPPSSKG. Thr304 and Thr311 each carry phosphothreonine; by MAPK7 and MAPK14. Residue Ser347 is modified to Phosphoserine; by MAPK7. Positions 382 to 394 are enriched in polar residues; the sequence is SNLSINTNQNINI. The tract at residues 382–495 is disordered; that stretch reads SNLSINTNQN…KRMRMDTWVT (114 aa). An N6-acetyllysine; alternate modification is found at Lys395. Lys395 is covalently cross-linked (Glycyl lysine isopeptide (Lys-Gly) (interchain with G-Cter in SUMO); alternate). At Ser400 the chain carries Phosphoserine; by CDK5. A Phosphothreonine modification is found at Thr407. Positions 421-433 are enriched in pro residues; it reads QQPPPQPPQPQPQ. A Phosphoserine modification is found at Ser441. The span at 441 to 454 shows a compositional bias: low complexity; the sequence is SPVDSLSSSSSSYD. Basic and acidic residues-rich tracts occupy residues 455–465 and 476–495; these read GSDREDPRGDF and NAEDRESPSVKRMRMDTWVT.

In terms of assembly, binds DNA as a homo- or heterodimer. Dimerizes with MEF2D. Interacts with HDAC7. Interacts with PIAS1; the interaction enhances sumoylation. Interacts with HDAC4, HDAC9 and SLC2A4RG. Interacts (via the N-terminal) with MAPK7; the interaction results in the phosphorylation and transcriptional activity of MEF2A. Post-translationally, constitutive phosphorylation on Ser-400 promotes Lys-395 sumoylation thus preventing acetylation at this site. Dephosphorylation on Ser-400 by PPP3CA upon neuron depolarization promotes a switch from sumoylation to acetylation on residue Lys-395 leading to inhibition of dendrite claw differentiation. Phosphorylation on Thr-304 and Thr-311 are the main sites involved in p38 MAPK signaling and activate transcription. Phosphorylated on these sites by MAPK14/p38alpha and MAPK11/p38beta, but not by MAPK13/p38delta nor by MAPK12/p38gamma. Phosphorylation on Ser-400 by CDK5 induced by neurotoxicity inhibits MEF2A transcriptional activation leading to apoptosis of cortical neurons. Phosphorylation on Thr-304, Thr-311 and Ser-347 can be induced by EGF. In terms of processing, sumoylation on Lys-395 is enhanced by PIAS1 and represses transcriptional activity. Phosphorylation on Ser-400 is required for sumoylation. Has no effect on nuclear location nor on DNA binding. Sumoylated with SUMO1 and, to a lesser extent with SUMO2 and SUMO3. PIASx facilitates sumoylation in postsynaptic dendrites in the cerebellar cortex and promotes their morphogenesis. Acetylation on Lys-395 activates transcriptional activity. Acetylated by p300 on several sites in diffentiating myocytes. Acetylation on Lys-4 increases DNA binding and transactivation. Hyperacetylation by p300 leads to enhanced cardiac myocyte growth and heart failure. Post-translationally, proteolytically cleaved in cerebellar granule neurons on several sites by caspase 3 and caspase 7 following neurotoxicity. Preferentially cleaves the CDK5-mediated hyperphosphorylated form which leads to neuron apoptosis and transcriptional inactivation.

Its subcellular location is the nucleus. Its function is as follows. Transcriptional activator which binds specifically to the MEF2 element, 5'-YTA[AT](4)TAR-3', found in numerous muscle-specific genes. Also involved in the activation of numerous growth factor- and stress-induced genes. Mediates cellular functions not only in skeletal and cardiac muscle development, but also in neuronal differentiation and survival. Plays diverse roles in the control of cell growth, survival and apoptosis via p38 MAPK signaling in muscle-specific and/or growth factor-related transcription. In cerebellar granule neurons, phosphorylated and sumoylated MEF2A represses transcription of NUR77 promoting synaptic differentiation. Associates with chromatin to the ZNF16 promoter. This chain is Myocyte-specific enhancer factor 2A (Mef2a), found in Rattus norvegicus (Rat).